We begin with the raw amino-acid sequence, 479 residues long: Hydrogenase-4 component D (479 aa).

Helical transmembrane passes span 3–23 (NLAL…SFSP), 30–50 (WGVL…SAFY), 55–75 (VAVT…LVID), 80–100 (LILF…TGYL), 117–137 (AFLL…TLLG), 168–188 (ALLI…TLFL), 208–228 (LVYG…PMQA), 238–258 (TPIS…YIFA), 270–290 (VIGG…FLMY), 300–320 (LAWS…LSIF), 330–350 (IAYI…AGAL), 369–389 (LPLP…VPPF), 390–410 (NGFF…VEYW), 411–431 (ILLP…AWFI), and 458–478 (LVLI…ATWL).

Belongs to the complex I subunit 5 family.

Its subcellular location is the cell inner membrane. Its function is as follows. Possible component of hydrogenase 4. This is Hydrogenase-4 component D from Escherichia coli (strain K12).